Here is a 326-residue protein sequence, read N- to C-terminus: MSDNMEFPTKRMRRLRKSPQIRNILRETRLHPSDLIYPMFVSEKLGRGDVEAIDTMPGQFRYSVDDAVSEASRLEDEGLSSVLIFGMPSAKDELASAAHDPHGVVQRTVRRLKEETDLVVMTDVCLCQYTSHGHCGIVVDGEIVNDETLEVLSRIALSHAEAGADVVAPSDMMDGRVAAIRRSLDDAGFQDTLIMSYAVKYASAFYAPFRGAVSSAPAFGDRRSYQMDPANIDEALIEAELDLREGADILMVKPALAYLDVIGKVRERFSVPLAAYNVSGEYSMLKAAIKSGYLTDEAIYESILSIKRAGADLIISHFAPDLLGVI.

Residues Cys125, Cys127, and Cys135 each coordinate Zn(2+). Catalysis depends on Lys200, which acts as the Schiff-base intermediate with substrate. 5-aminolevulinate contacts are provided by Arg210 and Arg222. Glu238 is a Mg(2+) binding site. Lys253 (schiff-base intermediate with substrate) is an active-site residue. Residue Ser279 coordinates 5-aminolevulinate.

It belongs to the ALAD family. As to quaternary structure, homooctamer. It depends on Zn(2+) as a cofactor.

The catalysed reaction is 2 5-aminolevulinate = porphobilinogen + 2 H2O + H(+). It participates in porphyrin-containing compound metabolism; protoporphyrin-IX biosynthesis; coproporphyrinogen-III from 5-aminolevulinate: step 1/4. Functionally, catalyzes an early step in the biosynthesis of tetrapyrroles. Binds two molecules of 5-aminolevulinate per subunit, each at a distinct site, and catalyzes their condensation to form porphobilinogen. In Methanothermobacter thermautotrophicus (strain ATCC 29096 / DSM 1053 / JCM 10044 / NBRC 100330 / Delta H) (Methanobacterium thermoautotrophicum), this protein is Delta-aminolevulinic acid dehydratase (hemB).